We begin with the raw amino-acid sequence, 333 residues long: Geranylgeranyl pyrophosphate synthase olcC (333 aa).

Isopentenyl diphosphate is bound by residues lysine 61, arginine 64, and histidine 93. Mg(2+)-binding residues include aspartate 100 and aspartate 104. Residue arginine 109 participates in dimethylallyl diphosphate binding. Arginine 110 provides a ligand contact to isopentenyl diphosphate. Positions 187, 188, and 221 each coordinate dimethylallyl diphosphate. Mg(2+) is bound at residue aspartate 224. Residues asparagine 228, lysine 238, and lysine 248 each coordinate dimethylallyl diphosphate.

The protein belongs to the FPP/GGPP synthase family. Mg(2+) is required as a cofactor.

The enzyme catalyses isopentenyl diphosphate + dimethylallyl diphosphate = (2E)-geranyl diphosphate + diphosphate. It catalyses the reaction isopentenyl diphosphate + (2E)-geranyl diphosphate = (2E,6E)-farnesyl diphosphate + diphosphate. It carries out the reaction isopentenyl diphosphate + (2E,6E)-farnesyl diphosphate = (2E,6E,10E)-geranylgeranyl diphosphate + diphosphate. Its pathway is secondary metabolite biosynthesis; terpenoid biosynthesis. In terms of biological role, geranylgeranyl pyrophosphate synthase; part of the gene cluster that mediates the biosynthesis of 15-deoxyoxalicine B. The first step of the pathway is the synthesis of nicotinyl-CoA from nicotinic acid by the nicotinic acid-CoA ligase olcI. Nicotinyl-CoA is then a substrate of polyketide synthase olcA to produce 4-hydroxy-6-(3-pyridinyl)-2H-pyran-2-one (HPPO) which is further prenylated by the polyprenyl transferase olcH to yield geranylgeranyl-HPPO. Geranylgeranyl pyrophosphate is provided by the cluster-specific geranylgeranyl pyrophosphate synthase olcC. The FAD-dependent monooxygenase olcE catalyzes the epoxidation of geranylgeranyl-HPPO and the terpene cyclase olcD catalyzes the cyclization of the terpenoid component, resulting in the formation of the tricyclic terpene moiety seen in predecaturin E. The cytochrome P450 monooxygenase then catalyzes the allylic oxidation of predecaturin E, which is followed by spirocylization with concomitant loss of one molecule of water to form decaturin E. Decaturin E is the substrate of the cytochrome P450 monooxygenase olcJ which hydroxylates it at the C-29 position to form decaturin F. The short-chain dehydrogenase/reductase olcF may catalyze the oxidation of decaturin F to generate the 29-hydroxyl-27-one intermediate, and subsequent hemiacetal formation probably leads to the formation of decaturin C. The dioxygenase olcK may be a peroxisomal enzyme that catalyzes the hydroxylation of decaturin C into decaturin A once decaturin C is shuttled into the peroxisome by the MFS transporter olcL. Finally the cytochrome P450 monooxygenase olcB catalyzes the oxidative rearrangement to yield 15-deoxyoxalicine B. In the absence of olcJ, decaturin E may be shunted to a pathway in which it is oxidized to a ketone, possibly by olcF, to form decaturin D, which undergoes further allylic oxidation to yield decaturin G. Moreover, in the absence of oclK or oclL, oclB can convert decaturin C into 15-deoxyoxalicine A. The protein is Geranylgeranyl pyrophosphate synthase olcC of Penicillium canescens.